A 149-amino-acid polypeptide reads, in one-letter code: Cyanate hydratase (149 aa).

Active-site residues include Arg90, Glu93, and Ser116.

This sequence belongs to the cyanase family.

The catalysed reaction is cyanate + hydrogencarbonate + 3 H(+) = NH4(+) + 2 CO2. In terms of biological role, catalyzes the reaction of cyanate with bicarbonate to produce ammonia and carbon dioxide. This chain is Cyanate hydratase, found in Aquifex aeolicus (strain VF5).